The primary structure comprises 317 residues: tRNA(Ile)-lysidine synthase (317 aa).

30–35 (SGGSDS) serves as a coordination point for ATP.

The protein belongs to the tRNA(Ile)-lysidine synthase family.

It is found in the cytoplasm. The catalysed reaction is cytidine(34) in tRNA(Ile2) + L-lysine + ATP = lysidine(34) in tRNA(Ile2) + AMP + diphosphate + H(+). In terms of biological role, ligates lysine onto the cytidine present at position 34 of the AUA codon-specific tRNA(Ile) that contains the anticodon CAU, in an ATP-dependent manner. Cytidine is converted to lysidine, thus changing the amino acid specificity of the tRNA from methionine to isoleucine. This chain is tRNA(Ile)-lysidine synthase, found in Chlamydia abortus (strain DSM 27085 / S26/3) (Chlamydophila abortus).